The sequence spans 334 residues: Nucleoid-associated protein ESA_01050 (334 aa).

The protein belongs to the YejK family.

It localises to the cytoplasm. The protein localises to the nucleoid. This Cronobacter sakazakii (strain ATCC BAA-894) (Enterobacter sakazakii) protein is Nucleoid-associated protein ESA_01050.